The sequence spans 467 residues: 3-isopropylmalate dehydratase large subunit (467 aa).

The [4Fe-4S] cluster site is built by Cys347, Cys407, and Cys410.

The protein belongs to the aconitase/IPM isomerase family. LeuC type 1 subfamily. As to quaternary structure, heterodimer of LeuC and LeuD. [4Fe-4S] cluster is required as a cofactor.

It carries out the reaction (2R,3S)-3-isopropylmalate = (2S)-2-isopropylmalate. It participates in amino-acid biosynthesis; L-leucine biosynthesis; L-leucine from 3-methyl-2-oxobutanoate: step 2/4. Its function is as follows. Catalyzes the isomerization between 2-isopropylmalate and 3-isopropylmalate, via the formation of 2-isopropylmaleate. The sequence is that of 3-isopropylmalate dehydratase large subunit from Gloeothece citriformis (strain PCC 7424) (Cyanothece sp. (strain PCC 7424)).